Here is a 303-residue protein sequence, read N- to C-terminus: Glycine--tRNA ligase alpha subunit (303 aa).

The protein belongs to the class-II aminoacyl-tRNA synthetase family. In terms of assembly, tetramer of two alpha and two beta subunits.

The protein localises to the cytoplasm. The catalysed reaction is tRNA(Gly) + glycine + ATP = glycyl-tRNA(Gly) + AMP + diphosphate. The chain is Glycine--tRNA ligase alpha subunit from Salmonella arizonae (strain ATCC BAA-731 / CDC346-86 / RSK2980).